Reading from the N-terminus, the 514-residue chain is Nuclear hormone receptor family member nhr-85 (514 aa).

The interval 28–48 is disordered; it reads TSFSSPPATSSSSLLSPSPSS. Positions 110–186 form a DNA-binding region, nuclear receptor; sequence TILCQVCSDK…VGMSRDAVRF (77 aa). NR C4-type zinc fingers lie at residues 113-133 and 150-174; these read CQVC…CEGC and CTRA…LKKC. The 299-residue stretch at 216–514 folds into the NR LBD domain; it reads QYENLTEVMH…VSPVPTTLSE (299 aa). Residues 465-514 are disordered; it reads ERPRRISSSGAQEPLNLSLPHVRHQVKRDVDSDEQLEEMKVSPVPTTLSE.

Belongs to the nuclear hormone receptor family.

It localises to the nucleus. Functionally, orphan nuclear receptor. In Caenorhabditis elegans, this protein is Nuclear hormone receptor family member nhr-85 (nhr-85).